Reading from the N-terminus, the 508-residue chain is DNA-directed RNA polymerase subunit Rpo1C (508 aa).

Residues 1 to 123 (MASLLWRDTS…EIKEKYGENL (123 aa)) are unknown. Positions 124–508 (SEDVQKVLDD…IYKGYPKTKK (385 aa)) are DNA-directed RNA polymerase subunit Rpo1C.

Belongs to the RNA polymerase beta' chain family. Part of the RNA polymerase complex.

The protein resides in the cytoplasm. It catalyses the reaction RNA(n) + a ribonucleoside 5'-triphosphate = RNA(n+1) + diphosphate. Its function is as follows. DNA-dependent RNA polymerase (RNAP) catalyzes the transcription of DNA into RNA using the four ribonucleoside triphosphates as substrates. Forms part of the jaw domain. This Thermoplasma acidophilum (strain ATCC 25905 / DSM 1728 / JCM 9062 / NBRC 15155 / AMRC-C165) protein is DNA-directed RNA polymerase subunit Rpo1C.